A 513-amino-acid polypeptide reads, in one-letter code: Beta-glucosidase 5 (513 aa).

An N-terminal signal peptide occupies residues Met-1–Gly-26. An a beta-D-glucoside-binding site is contributed by Gln-46. Residue Glu-192 is the Proton donor of the active site. An intrachain disulfide couples Cys-211 to Cys-220. N-linked (GlcNAc...) asparagine glycans are attached at residues Asn-224 and Asn-273. Residues Tyr-336 and Glu-405 each coordinate a beta-D-glucoside. The Nucleophile role is filled by Glu-405. Residue Asn-412 is glycosylated (N-linked (GlcNAc...) asparagine). A beta-D-glucoside-binding positions include Trp-447, Glu-454 to Tyr-455, and Tyr-463.

The protein belongs to the glycosyl hydrolase 1 family.

The enzyme catalyses Hydrolysis of terminal, non-reducing beta-D-glucosyl residues with release of beta-D-glucose.. The polypeptide is Beta-glucosidase 5 (BGLU5) (Oryza sativa subsp. japonica (Rice)).